We begin with the raw amino-acid sequence, 244 residues long: ATP synthase subunit 4, mitochondrial (244 aa).

Residues 1–35 (MSMSMGVRGLALRSVSKTLFSQGVRCPSMVIGARY) constitute a mitochondrion transit peptide. Phosphoserine is present on Ser-144.

The protein belongs to the eukaryotic ATPase B chain family. F-type ATPases have 2 components, CF(1) - the catalytic core - and CF(0) - the membrane proton channel. In yeast, the dimeric form of ATP synthase consists of 17 polypeptides: alpha, beta, gamma, delta, epsilon, 4 (B), 5 (OSCP), 6 (A), 8, 9 (C), d, E (Tim11), f, g, h, i/j and k.

It is found in the mitochondrion. The protein resides in the mitochondrion inner membrane. Its function is as follows. Mitochondrial membrane ATP synthase (F(1)F(0) ATP synthase or Complex V) produces ATP from ADP in the presence of a proton gradient across the membrane which is generated by electron transport complexes of the respiratory chain. F-type ATPases consist of two structural domains, F(1) - containing the extramembraneous catalytic core, and F(0) - containing the membrane proton channel, linked together by a central stalk and a peripheral stalk. During catalysis, ATP synthesis in the catalytic domain of F(1) is coupled via a rotary mechanism of the central stalk subunits to proton translocation. Part of the complex F(0) domain and the peripheric stalk, which acts as a stator to hold the catalytic alpha(3)beta(3) subcomplex and subunit a/ATP6 static relative to the rotary elements. This Saccharomyces cerevisiae (strain ATCC 204508 / S288c) (Baker's yeast) protein is ATP synthase subunit 4, mitochondrial (ATP4).